Here is a 417-residue protein sequence, read N- to C-terminus: Xylulose 5-phosphate/phosphate translocator, chloroplastic (417 aa).

The N-terminal 82 residues, 1-82 (MISLNLSPSL…GFSRKPRSIA (82 aa)), are a transit peptide targeting the chloroplast. The interval 66–102 (TNPESSSGFSRKPRSIAAVGSSDSNPDEKSDLGEAEK) is disordered. At Ala83 the chain carries N-acetylalanine. Over residues 91–102 (PDEKSDLGEAEK) the composition is skewed to basic and acidic residues. 9 helical membrane-spanning segments follow: residues 109–129 (TLQL…FNIF), 141–161 (WLLA…LWSF), 173–193 (FIIA…SACV), 198–218 (VAVS…VIFS), 225–245 (YPLA…LAAV), 247–267 (EVSF…GFVL), 287–307 (LYGC…IFVE), 318–338 (AIAS…SGVF), and 384–404 (LNAL…QATA). The EamA domain occupies 127–243 (NIFNKKALNV…LPIVMGCSLA (117 aa)).

Belongs to the TPT transporter family. TPT (TC 2.A.7.9) subfamily. Widely expressed.

The protein localises to the plastid. It localises to the chloroplast membrane. Sugar phosphate/phosphate translocator that transports inorganic phosphate, triose phosphate, 3-phosphoglycerate, xylulose 5-phosphate (Xul-5-P) and to a lesser extent ribulose 5-phosphate. Does not transport ribose 5-phosphate or hexose phosphates. Provides cytosolic Xul-5-P to the chloroplast, where it is used as an intermediate in the plastidic pentose phosphate pathways. The chain is Xylulose 5-phosphate/phosphate translocator, chloroplastic (XPT) from Arabidopsis thaliana (Mouse-ear cress).